The sequence spans 145 residues: Transcription factor MEE8 (145 aa).

A compositionally biased stretch (basic and acidic residues) spans 33–49 (EKGVEKVGQKRSAESRR). The interval 33–61 (EKGVEKVGQKRSAESRREGKKKRVKTQCV) is disordered. The 50-residue stretch at 66–115 (DKSDHDTLLKKKRRERIRRQLETLKEITPNCPQSDINAILDCVIEYTNNL) folds into the bHLH domain.

Homodimer.

The protein resides in the nucleus. Its function is as follows. Required during early embryo development, for the endosperm formation. This Arabidopsis thaliana (Mouse-ear cress) protein is Transcription factor MEE8 (MEE8).